A 184-amino-acid chain; its full sequence is dCTP deaminase (184 aa).

Residues K107–R112, T131–E133, Q152, Y166, and Q176 each bind dCTP. E133 (proton donor/acceptor) is an active-site residue.

This sequence belongs to the dCTP deaminase family. In terms of assembly, homotrimer.

The enzyme catalyses dCTP + H2O + H(+) = dUTP + NH4(+). It functions in the pathway pyrimidine metabolism; dUMP biosynthesis; dUMP from dCTP (dUTP route): step 1/2. In terms of biological role, catalyzes the deamination of dCTP to dUTP. The polypeptide is dCTP deaminase (Gemmatimonas aurantiaca (strain DSM 14586 / JCM 11422 / NBRC 100505 / T-27)).